We begin with the raw amino-acid sequence, 234 residues long: 2-phospho-L-lactate guanylyltransferase (234 aa).

The protein belongs to the CofC family. As to quaternary structure, homodimer.

The enzyme catalyses (2S)-2-phospholactate + GTP + H(+) = (2S)-lactyl-2-diphospho-5'-guanosine + diphosphate. It participates in cofactor biosynthesis; coenzyme F420 biosynthesis. Guanylyltransferase that catalyzes the activation of (2S)-2-phospholactate (2-PL) as (2S)-lactyl-2-diphospho-5'-guanosine, via the condensation of 2-PL with GTP. It is involved in the biosynthesis of coenzyme F420, a hydride carrier cofactor. The polypeptide is 2-phospho-L-lactate guanylyltransferase (Methanobrevibacter ruminantium (strain ATCC 35063 / DSM 1093 / JCM 13430 / OCM 146 / M1) (Methanobacterium ruminantium)).